The sequence spans 397 residues: Protein shisa-8 (397 aa).

An N-terminal signal peptide occupies residues 1-38 (MARAGARGLLGGRRPPGLRLALALRLALLLARPPSGRA). The Extracellular segment spans residues 39 to 138 (GAPEAQGPAA…APRDPGRERS (100 aa)). Asn-75 carries N-linked (GlcNAc...) asparagine glycosylation. Positions 117–136 (TGRPPARARDTAAPRDPGRE) are disordered. The segment covering 123–136 (RARDTAAPRDPGRE) has biased composition (basic and acidic residues). The helical transmembrane segment at 139–159 (HTAVYAVCGVAALLVLAGIGA) threads the bilayer. Residues 160-397 (RLGLERAHSP…RTNSKTEVTV (238 aa)) are Cytoplasmic-facing. Disordered regions lie at residues 182-250 (LLKQ…GGSL) and 281-303 (FPALEPSPRQPPARAPRPSPDLP). Composition is skewed to pro residues over residues 188–197 (PQEPLPPTLG) and 288–303 (PRQPPARAPRPSPDLP).

Belongs to the shisa family. As to quaternary structure, interacts with AMPAR subunits GRIA1 and GRIA2.

The protein resides in the membrane. In terms of biological role, may regulate trafficking and current kinetics of AMPA-type glutamate receptor (AMPAR) at synapses. The chain is Protein shisa-8 from Homo sapiens (Human).